The chain runs to 520 residues: Hydroxymethylglutaryl-CoA synthase, cytoplasmic (520 aa).

Phosphoserine is present on Ser4. Asp43 and Ala44 together coordinate (3S)-3-hydroxy-3-methylglutaryl-CoA. Position 44–46 (44–46) interacts with CoA; sequence AGK. N6-acetyllysine is present on Lys46. Glu95 functions as the Proton donor/acceptor in the catalytic mechanism. Residues Cys129, Asn167, Thr171, Ser221, and His264 each coordinate (3S)-3-hydroxy-3-methylglutaryl-CoA. Cys129 functions as the Acyl-thioester intermediate in the catalytic mechanism. Asn167 is a CoA binding site. Position 221 (Ser221) interacts with CoA. The active-site Proton donor/acceptor is the His264. Residues Lys269 and Lys273 each coordinate CoA. The (3S)-3-hydroxy-3-methylglutaryl-CoA site is built by Lys273, Asn343, and Ser377. Position 273 is an N6-acetyllysine (Lys273). At Thr476 the chain carries Phosphothreonine. The tract at residues 492–520 is disordered; that stretch reads HIPSPAKKVPRLPATAAEPEAAVISNGEH. A phosphoserine mark is found at Ser495 and Ser516.

This sequence belongs to the thiolase-like superfamily. HMG-CoA synthase family. As to quaternary structure, homodimer.

It localises to the cytoplasm. The enzyme catalyses acetoacetyl-CoA + acetyl-CoA + H2O = (3S)-3-hydroxy-3-methylglutaryl-CoA + CoA + H(+). The protein operates within metabolic intermediate biosynthesis; (R)-mevalonate biosynthesis; (R)-mevalonate from acetyl-CoA: step 2/3. Functionally, catalyzes the condensation of acetyl-CoA with acetoacetyl-CoA to form HMG-CoA, which is converted by HMG-CoA reductase (HMGCR) into mevalonate, a precursor for cholesterol synthesis. The protein is Hydroxymethylglutaryl-CoA synthase, cytoplasmic of Homo sapiens (Human).